The sequence spans 183 residues: Microfibrillar-associated protein 2 (183 aa).

Residues 1 to 17 (MRAAYLFLLFLPAGLLA) constitute a signal peptide (or 19). Gln-18 bears the Pyrrolidone carboxylic acid mark. 3 positions are modified to sulfotyrosine: Tyr-47, Tyr-48, and Tyr-50. Positions 58-94 (SEEQFQFQSQQQVQQEVIPAPTPEPGNAELEPTEPGP) are disordered. A compositionally biased stretch (low complexity) spans 60 to 74 (EQFQFQSQQQVQQEV). In terms of domain architecture, ShKT spans 153–183 (CRDKFSKCGVMASSGLCQSVAASCARSCGSC). 3 disulfide bridges follow: Cys-153/Cys-183, Cys-160/Cys-176, and Cys-169/Cys-180.

This sequence belongs to the MFAP family. Forms a ternary complex with BGN and ELN. Interacts with FBN1 (via N-terminal domain) and FBN2. Forms intermolecular disulfide bonds either with other MAGP-1 molecules or with other components of the microfibrils. May form transglutaminase cross-links. Post-translationally, O-glycosylated.

The protein resides in the secreted. It localises to the extracellular space. The protein localises to the extracellular matrix. Component of the elastin-associated microfibrils. This chain is Microfibrillar-associated protein 2 (MFAP2), found in Homo sapiens (Human).